The following is a 375-amino-acid chain: Probable pectin lyase B (375 aa).

The first 19 residues, methionine 1–alanine 19, serve as a signal peptide directing secretion. Disulfide bonds link cysteine 82/cysteine 101 and cysteine 91/cysteine 225. Asparagine 128 carries N-linked (GlcNAc...) asparagine glycosylation. Residue arginine 255 is part of the active site. Cysteines 321 and 329 form a disulfide.

Belongs to the polysaccharide lyase 1 family.

It localises to the secreted. The enzyme catalyses Eliminative cleavage of (1-&gt;4)-alpha-D-galacturonan methyl ester to give oligosaccharides with 4-deoxy-6-O-methyl-alpha-D-galact-4-enuronosyl groups at their non-reducing ends.. Functionally, pectinolytic enzymes consist of four classes of enzymes: pectin lyase, polygalacturonase, pectin methylesterase and rhamnogalacturonase. Among pectinolytic enzymes, pectin lyase is the most important in depolymerization of pectin, since it cleaves internal glycosidic bonds of highly methylated pectins. This chain is Probable pectin lyase B (pelB), found in Aspergillus fumigatus (strain CBS 144.89 / FGSC A1163 / CEA10) (Neosartorya fumigata).